The sequence spans 207 residues: Large ribosomal subunit protein uL3c (207 aa).

The tract at residues 115–151 is disordered; that stretch reads IGKGFAGNQKRHNFSRGPMTHGSKNHRLPGSIGAGST.

The protein belongs to the universal ribosomal protein uL3 family. Part of the 50S ribosomal subunit.

The protein resides in the plastid. Its subcellular location is the chloroplast. In terms of biological role, one of the primary rRNA binding proteins, it binds directly near the 3'-end of the 23S rRNA, where it nucleates assembly of the 50S subunit. This is Large ribosomal subunit protein uL3c (rpl3) from Emiliania huxleyi (Coccolithophore).